The following is a 252-amino-acid chain: MSVPPGSIIVSDWHRCPDSREFFSKILHKKRRRKFGLLEAPMMPPQMNVDLVRYKVFLSGKTGVGKSALAARLAGLDLPKMHYETTGIETTVVFWPVRLKESGRVLFFRFELWDCGESAMRRFDHMLLSCKEKVDAILFLFSFTDRGSFDDLTNQISRITEPSDRVVKLVVGTKFDLFMHTDVTESDVTHFQEVWGLPVFRVGGDVSAGLGEVAPLLNALAENLWHQDCMAASSVSISPQAALRETSSEIIV.

The interval 46 to 252 is small GTPase-like; sequence QMNVDLVRYK…LRETSSEIIV (207 aa). GTP is bound by residues 62 to 67 and 173 to 176; these read TGVGKS and TKFD.

The protein belongs to the small GTPase superfamily. Rab family.

It localises to the cytoplasm. The protein localises to the cytoskeleton. The protein resides in the cilium basal body. In terms of biological role, potential effector of the planar cell polarity signaling pathway. Plays a role in targeted membrane trafficking most probably at the level of vesicle fusion with membranes. Involved in cilium biogenesis by regulating the transport of cargo proteins to the basal body and to the apical tips of cilia. More generally involved in exocytosis in secretory cells. The chain is Ciliogenesis and planar polarity effector 2 (cplane2) from Danio rerio (Zebrafish).